We begin with the raw amino-acid sequence, 463 residues long: Mitochondrial dynamics protein MIEF1 (463 aa).

Residues 1 to 23 (MAGAGERKGKKDDNGIGTAIDFV) are Mitochondrial intermembrane-facing. The helical transmembrane segment at 24 to 46 (LSNARLVLGVGGAAMLGIATLAV) threads the bilayer. Residues 47 to 463 (KRMYDRAISA…LSEPEVLLQT (417 aa)) are Cytoplasmic-facing. Residues 49–195 (MYDRAISAPT…LSGSLYDDLQ (147 aa)) are dimerization. Phosphoserine occurs at positions 55, 59, 79, and 94. Positions 57 to 77 (PTSPTRLSHSGKRSWEEPNWM) are disordered. The segment at 96 to 123 (QTLPTDSSTFDTDTFCPPRPKPVARKGQ) is disordered. Residues 100–110 (TDSSTFDTDTF) are compositionally biased toward low complexity. The interval 160–169 (AAVDICAELR) is important for interaction with DNM1L. Serine 187, serine 189, and histidine 201 together coordinate ADP. The interval 234–242 (RRENPEYFP) is important for interaction with DNM1L. The ADP site is built by serine 340, arginine 342, and lysine 368.

The protein belongs to the SMCR7 family. Homodimer. Interacts with DNM1L. In terms of tissue distribution, expression is relatively high in heart, skeletal muscle, pancreas and kidney.

It localises to the mitochondrion outer membrane. Mitochondrial outer membrane protein which regulates mitochondrial fission/fusion dynamics. Promotes the recruitment and association of the fission mediator dynamin-related protein 1 (DNM1L) to the mitochondrial surface independently of the mitochondrial fission FIS1 and MFF proteins. Regulates DNM1L GTPase activity and DNM1L oligomerization. Binds ADP and can also bind GDP, although with lower affinity. Does not bind CDP, UDP, ATP, AMP or GTP. Inhibits DNM1L GTPase activity in the absence of bound ADP. Requires ADP to stimulate DNM1L GTPase activity and the assembly of DNM1L into long, oligomeric tubules with a spiral pattern, as opposed to the ring-like DNM1L oligomers observed in the absence of bound ADP. Does not require ADP for its function in recruiting DNM1L. The chain is Mitochondrial dynamics protein MIEF1 from Homo sapiens (Human).